Consider the following 88-residue polypeptide: UPF0367 protein Synpcc7942_1638 (88 aa).

Belongs to the UPF0367 family.

The sequence is that of UPF0367 protein Synpcc7942_1638 from Synechococcus elongatus (strain ATCC 33912 / PCC 7942 / FACHB-805) (Anacystis nidulans R2).